Reading from the N-terminus, the 717-residue chain is Glutamine--fructose-6-phosphate aminotransferase [isomerizing] (717 aa).

Catalysis depends on cysteine 2, which acts as the For GATase activity. The region spanning 2–318 (CGIFGYCNYL…DDDLAHIYDG (317 aa)) is the Glutamine amidotransferase type-2 domain. Serine 253 carries the phosphoserine modification. Residue threonine 334 is modified to Phosphothreonine. At serine 336 the chain carries Phosphoserine. SIS domains are found at residues 390 to 529 (WLPV…DRVS) and 562 to 707 (CATE…VDFP).

The enzyme catalyses D-fructose 6-phosphate + L-glutamine = D-glucosamine 6-phosphate + L-glutamate. The protein operates within nucleotide-sugar biosynthesis; UDP-N-acetyl-alpha-D-glucosamine biosynthesis; alpha-D-glucosamine 6-phosphate from D-fructose 6-phosphate: step 1/1. Involved in amino sugar synthesis (formation of chitin, supplies the amino sugars of asparagine-linked oligosaccharides of glycoproteins). In Saccharomyces cerevisiae (strain ATCC 204508 / S288c) (Baker's yeast), this protein is Glutamine--fructose-6-phosphate aminotransferase [isomerizing] (GFA1).